Consider the following 118-residue polypeptide: Large ribosomal subunit protein bL20 (118 aa).

The protein belongs to the bacterial ribosomal protein bL20 family.

Its function is as follows. Binds directly to 23S ribosomal RNA and is necessary for the in vitro assembly process of the 50S ribosomal subunit. It is not involved in the protein synthesizing functions of that subunit. This is Large ribosomal subunit protein bL20 from Pseudomonas entomophila (strain L48).